We begin with the raw amino-acid sequence, 279 residues long: Pantothenate synthetase (279 aa).

26 to 33 (MGNLHEGH) is an ATP binding site. The active-site Proton donor is the His-33. Gln-57 provides a ligand contact to (R)-pantoate. Position 57 (Gln-57) interacts with beta-alanine. 144–147 (GKKD) serves as a coordination point for ATP. Residue Gln-150 participates in (R)-pantoate binding. ATP contacts are provided by residues Val-173 and 181–184 (LSSR).

Belongs to the pantothenate synthetase family. As to quaternary structure, homodimer.

Its subcellular location is the cytoplasm. The catalysed reaction is (R)-pantoate + beta-alanine + ATP = (R)-pantothenate + AMP + diphosphate + H(+). Its pathway is cofactor biosynthesis; (R)-pantothenate biosynthesis; (R)-pantothenate from (R)-pantoate and beta-alanine: step 1/1. Its function is as follows. Catalyzes the condensation of pantoate with beta-alanine in an ATP-dependent reaction via a pantoyl-adenylate intermediate. This chain is Pantothenate synthetase, found in Burkholderia orbicola (strain MC0-3).